The following is a 487-amino-acid chain: GTPase Der (487 aa).

2 consecutive EngA-type G domains span residues Pro-5–Ile-169 and Ile-178–Gln-351. GTP is bound by residues Gly-11–Ser-18, Asp-58–Ile-62, Asn-121–Asp-124, Gly-184–Ser-191, Asp-231–Ile-235, and Asn-296–Asp-299. In terms of domain architecture, KH-like spans Lys-352–Asp-439. Residues Pro-441–Tyr-466 form a disordered region.

Belongs to the TRAFAC class TrmE-Era-EngA-EngB-Septin-like GTPase superfamily. EngA (Der) GTPase family. In terms of assembly, associates with the 50S ribosomal subunit.

In terms of biological role, GTPase that plays an essential role in the late steps of ribosome biogenesis. The sequence is that of GTPase Der from Protochlamydia amoebophila (strain UWE25).